A 483-amino-acid polypeptide reads, in one-letter code: MLTLDTLNVMLAVSEEGLIEEMIIALLASPQLAVFFEKFPRLKAAITDDVPRWREALRSRLKDARVPPELTEEVMCYQQSQLLSTPQFIVQLPQILDLLHRLNSPWAEQARQLVDANSTITSALHTLFLQRWRLSLIVQATTLNQQLLEEEREQLLSEVQERMTLSGQLEPILADNNTAAGRLWDMSAGQLKRGDYQLIVKYGEFLNEQPELKRLAEQLGRSREAKSIPRNDAQMETFRTMVREPATVPEQVDGLQQSDDILRLLPPELATLGITELEYEFYRRLVEKQLLTYRLHGESWREKMIERPVVHKDYDEQPRGPFIVCVDTSGSMGGFNEQCAKAFCLALMRIALAENRRCYIMLFSTEIVRYELSGPQGIEQAIRFLSQQFRGGTDLASCFRAIMERLQSREWFDADAVVISDFIAQRLPDDVTSKVKELQRIHQHRFHAVAMSAHGKPGIMRIFDHIWRFDTGMRSRLLRRWRR.

It belongs to the ViaA family. In terms of assembly, homodimer. Interacts with RavA.

The protein resides in the cytoplasm. In terms of biological role, component of the RavA-ViaA chaperone complex, which may act on the membrane to optimize the function of some of the respiratory chains. ViaA stimulates the ATPase activity of RavA. The chain is Regulatory protein ViaA from Escherichia coli O6:K15:H31 (strain 536 / UPEC).